The following is a 239-amino-acid chain: Tetraspanin-9 (239 aa).

Over 1–12 (MARGCLCCVKYM) the chain is Cytoplasmic. Residues 13 to 33 (LFLFNLLFWLGGCGLLGVGVW) traverse the membrane as a helical segment. Over 34–55 (LSVSQGSFATLSPSFPSISAAN) the chain is Extracellular. The helical transmembrane segment at 56–76 (LIITLGAVIMVTGFLGCLGAI) threads the bilayer. Over 77 to 85 (KENKCLLLS) the chain is Cytoplasmic. The chain crosses the membrane as a helical span at residues 86-106 (FFITLLVILLAELILLILFFV). At 107–203 (YTDNVSENAR…VEEWLDDNKH (97 aa)) the chain is on the extracellular side. Residues asparagine 110 and asparagine 180 are each glycosylated (N-linked (GlcNAc...) asparagine). A helical transmembrane segment spans residues 204 to 224 (LLGTIAMCVLVIQLLGMAFSM). At 225–239 (TLYQQIHRSGKKYEA) the chain is on the cytoplasmic side.

The protein belongs to the tetraspanin (TM4SF) family.

Its subcellular location is the membrane. This chain is Tetraspanin-9 (tspan9), found in Salmo salar (Atlantic salmon).